Here is a 394-residue protein sequence, read N- to C-terminus: Elongation factor Tu (394 aa).

The tr-type G domain maps to 10 to 204 (KPHVNIGTIG…AVDSWIPLPE (195 aa)). Residues 19–26 (GHVDHGKT) are G1. 19-26 (GHVDHGKT) is a GTP binding site. A Mg(2+)-binding site is contributed by threonine 26. A G2 region spans residues 60–64 (GITIN). Positions 81–84 (DCPG) are G3. GTP is bound by residues 81 to 85 (DCPGH) and 136 to 139 (NKCD). Residues 136 to 139 (NKCD) are G4. Residues 174 to 176 (SGL) are G5.

It belongs to the TRAFAC class translation factor GTPase superfamily. Classic translation factor GTPase family. EF-Tu/EF-1A subfamily. As to quaternary structure, monomer.

It is found in the cytoplasm. It catalyses the reaction GTP + H2O = GDP + phosphate + H(+). In terms of biological role, GTP hydrolase that promotes the GTP-dependent binding of aminoacyl-tRNA to the A-site of ribosomes during protein biosynthesis. This Ureaplasma parvum serovar 3 (strain ATCC 27815 / 27 / NCTC 11736) protein is Elongation factor Tu.